The sequence spans 306 residues: Probable 2-dehydro-3-deoxygalactonokinase DgoK1 (306 aa).

This sequence belongs to the DgoK family.

It carries out the reaction 2-dehydro-3-deoxy-D-galactonate + ATP = 2-dehydro-3-deoxy-6-phospho-D-galactonate + ADP + H(+). It participates in carbohydrate acid metabolism; D-galactonate degradation; D-glyceraldehyde 3-phosphate and pyruvate from D-galactonate: step 2/3. Functionally, involved in the degradation of galactose via the DeLey-Doudoroff pathway. The polypeptide is Probable 2-dehydro-3-deoxygalactonokinase DgoK1 (dgoK1) (Rhizobium meliloti (strain 1021) (Ensifer meliloti)).